The chain runs to 185 residues: uncharacterized protein (185 aa).

Positions 1–24 (MPCNRAVFGAFVLALLISLQSVYF) are cleaved as a signal peptide. A helical membrane pass occupies residues 50 to 70 (VAVNVIVEFSFDILFFLCGLL). The segment covering 96–113 (ELEHVSSRRRNDSRDDST) has biased composition (basic and acidic residues). A disordered region spans residues 96–185 (ELEHVSSRRR…LFTAGGIGLP (90 aa)). Residues 114-126 (VRNVSKTSPLASQ) are compositionally biased toward polar residues. The segment covering 127–138 (RSRDHFDGDPRE) has biased composition (basic and acidic residues). The span at 139-155 (PAPPAYSPADFYPPPAS) shows a compositional bias: pro residues.

The protein resides in the host membrane. This is an uncharacterized protein from Colorado tick fever virus (strain USA/Florio N-7180) (CTFV).